A 181-amino-acid chain; its full sequence is Crossover junction endodeoxyribonuclease RuvC (181 aa).

Catalysis depends on residues D7, E67, and D139. 3 residues coordinate Mg(2+): D7, E67, and D139.

Belongs to the RuvC family. Homodimer which binds Holliday junction (HJ) DNA. The HJ becomes 2-fold symmetrical on binding to RuvC with unstacked arms; it has a different conformation from HJ DNA in complex with RuvA. In the full resolvosome a probable DNA-RuvA(4)-RuvB(12)-RuvC(2) complex forms which resolves the HJ. Mg(2+) serves as cofactor.

The protein localises to the cytoplasm. The enzyme catalyses Endonucleolytic cleavage at a junction such as a reciprocal single-stranded crossover between two homologous DNA duplexes (Holliday junction).. Functionally, the RuvA-RuvB-RuvC complex processes Holliday junction (HJ) DNA during genetic recombination and DNA repair. Endonuclease that resolves HJ intermediates. Cleaves cruciform DNA by making single-stranded nicks across the HJ at symmetrical positions within the homologous arms, yielding a 5'-phosphate and a 3'-hydroxyl group; requires a central core of homology in the junction. The consensus cleavage sequence is 5'-(A/T)TT(C/G)-3'. Cleavage occurs on the 3'-side of the TT dinucleotide at the point of strand exchange. HJ branch migration catalyzed by RuvA-RuvB allows RuvC to scan DNA until it finds its consensus sequence, where it cleaves and resolves the cruciform DNA. In Cupriavidus taiwanensis (strain DSM 17343 / BCRC 17206 / CCUG 44338 / CIP 107171 / LMG 19424 / R1) (Ralstonia taiwanensis (strain LMG 19424)), this protein is Crossover junction endodeoxyribonuclease RuvC.